Consider the following 497-residue polypeptide: Glycogen synthase (497 aa).

Lysine 15 serves as a coordination point for ADP-alpha-D-glucose.

The protein belongs to the glycosyltransferase 1 family. Bacterial/plant glycogen synthase subfamily.

The catalysed reaction is [(1-&gt;4)-alpha-D-glucosyl](n) + ADP-alpha-D-glucose = [(1-&gt;4)-alpha-D-glucosyl](n+1) + ADP + H(+). Its pathway is glycan biosynthesis; glycogen biosynthesis. In terms of biological role, synthesizes alpha-1,4-glucan chains using ADP-glucose. The polypeptide is Glycogen synthase (Thermodesulfovibrio yellowstonii (strain ATCC 51303 / DSM 11347 / YP87)).